We begin with the raw amino-acid sequence, 1951 residues long: MGENEDEKQAQASQVFENFVQATTCKGTLQAFNILTCLLDLDPLDHRNFYSQLKSKVNTWKAKALWHKLDKRGSHKEYKRGKACSNTKCLIVGGGPCGLRTAIELAYLGAKVVVVEKRDTFSRNNVLHLWPFTIHDLRGLGAKKFYGKFCAGSIDHISIRQLQLILFKVALMLGVEVHVNVEFVRVLEPPEDQENQKVGWRAEFLPADHALSDFEFDVIIGADGHRNTLEGFRRKEFRGKLAIAITANFINRNSTAEAKVEEISGVAFIFNQKFFQDLKEETGIDLENIVYYKDSTHYFVMTAKKQSLLDKGVILNDYIDTEMLLCSENVNQDNLLSYAREAADFATNYQLPSLDFAINHNGQPDVAMFDFTSMYASENAALMRERQAHQLLVALVGDSLLEPFWPMGTGCARGFLAAFDTAWMVKSWDQGTPPLEVLAERESLYRLLPQTTPENINKNFEQYTLDPATRYPNLNLHCVRPHQVKHLYITKEMDRFPLERWGSVRRSVSLSRRESDIRPNKLLTWCQQQTKGYQHVRVTDLTTSWRSGLALCAIIHSFRPELINFDSLNEDDAVENNQLAFDVAKREFGILPVTTGKEMASTQEPDKLSMVMYLSKFYELFRGTPLRPMDSWRKNYGENADFGLGKTFIQNNYLNLTLPRKRTPRVDTQTEENDMNKRRRQGFNHLEELPSFSSRSLGSSQEYAKESGSQNKVKHMANQLLAKFEENTRNPSVVKQDCRRVSGIGKPVLCSASRPPGTSCCPKLEESTPRLPPPLKRQFSSTVATGQVLRELNQVPASGECPSRPWRARAKSDLQLGGVENLATLPRTCQGALALSGVLRRLQQVEEKVLQKRAQNLANREFHTKNIKEKAAHLASMFGHGDLPQDKLLSKRVPHAHPPSPPSCLPSPHPAAASSPPAADSVSPARKVVALNHRLPPPLHLTVGKVSSGIGAAAEVLVNLYLNDHRPKTQATSPDLESPRKAFPLSLGGRDTCYFCKKRVYMIERLSAEGHFFHQECFRCSVCSATLRLAAYAFDCDEGKFYCKPHFVHCKTSSKQRKRRAELNQQREEEGTWQEQEAPRRDVPTESSCAVAAISTPEGSPPDEPISPKKPKSVPEPNPRDVEAEATSPRPSEWTSVRISPGEDTVRQDVLAVRVLVTSEDSSSDTESDYGSITAPCAGAYEERPQLPESPPLSKPLTRHISLRENLTQPVSLLHEEPQALPALQRAHSLQSPTPSKYQNWRRRFQSNSTPMNQRAPSPPKEPPPPPSLSSSSSLPSSFSSASVPGHTADDSSSPQVTYNLHSPQISRGDVSPTPIYLRRARAQGIVKEIPLYLPHSPMLESTEDCLVEPGRESLRSPEEISSSEGCQEARALGNTRSIQHPILGKDQYLPNQNLALGAAGNPGDPREESRMGQPGGPELSKERKLGLKKLVLTEEQKNKLLDWSDCTQEHKTGEQLSQESAENIRGGSLKPTCSSTLSQAVKEKLLSQKKALGGMRTPAVKAPQEREVPPPKSPLKLIANAILRSLLHNSEAGKKTSPKPESKTLPRGQPHARSFSLRKLGSSKDGDQQSPGRHMAKKASAFFSLASPTSKVAQASDLSLPNSILRSRSLPSRPSKMFFSTTPHSKVEDVPTLLEKVSLQDATHSPKTGASHISSLGLKDKSFESFLQECKQRKDIGDFFNSPKEEGPPGNRVPSLEKLVQPVGSTSMGQVAHPSSTGQDARKLEGGEGGSSLVSSLVLVSDPVAPVTEATSSPTSSSAEEEADSQLSLRIKEKILRRRRKLEKQSAKQEELKRLHKAQAIQRQLEEVEERQRTLAIQGVKLEKVLRGEAADSGTQDEAQLLQEWFKLVLEKNKLMRYESELLIMAQELELEDHQSRLEQKLRQKMLKDEGQKDENDLKEEQEIFEEMMQVIEQRNKLVDSLEEQRVKERTQDQHFENFVLSRGCQLSRT.

The interval 2-494 (GENEDEKQAQ…KHLYITKEMD (493 aa)) is monooxygenase domain. Residues Cys-97, 116–118 (EKR), 123–125 (RNN), Phe-183, Tyr-298, and Asp-398 contribute to the FAD site. The 104-residue stretch at 516–619 (DIRPNKLLTW…MVMYLSKFYE (104 aa)) folds into the Calponin-homology (CH) domain. Residue Ser-631 is modified to Phosphoserine. The short motif at 660 to 681 (RKRTPRVDTQTEENDMNKRRRQ) is the Nuclear localization signal element. Disordered stretches follow at residues 663 to 712 (TPRV…SQNK) and 891 to 921 (KRVPHAHPPSPPSCLPSPHPAAASSPPAADS). Residues 691-700 (SFSSRSLGSS) show a composition bias toward low complexity. Residues 896 to 909 (AHPPSPPSCLPSPH) are compositionally biased toward pro residues. A compositionally biased stretch (low complexity) spans 910–921 (PAAASSPPAADS). Residues 991–1053 (DTCYFCKKRV…KPHFVHCKTS (63 aa)) enclose the LIM zinc-binding domain. Positions 993, 996, 1014, 1017, 1020, 1023, 1043, and 1046 each coordinate Zn(2+). Position 1052 is a phosphoserine (Thr-1052). Disordered regions lie at residues 1054 to 1141 (SKQR…RISP), 1158 to 1314 (TSED…VSPT), 1348 to 1368 (VEPGRESLRSPEEISSSEGCQ), 1383 to 1427 (ILGK…RKLG), 1451 to 1476 (HKTGEQLSQESAENIRGGSLKPTCSS), 1489 to 1580 (QKKA…AKKA), 1594 to 1624 (AQASDLSLPNSILRSRSLPSRPSKMFFSTTP), 1678 to 1697 (GDFFNSPKEEGPPGNRVPSL), 1706 to 1731 (STSMGQVAHPSSTGQDARKLEGGEGG), and 1747 to 1766 (PVTEATSSPTSSSAEEEADS). The span at 1061–1070 (AELNQQREEE) shows a compositional bias: basic and acidic residues. Polar residues-rich tracts occupy residues 1129–1138 (PRPSEWTSVR), 1228–1239 (HSLQSPTPSKYQ), and 1246–1256 (QSNSTPMNQRA). Over residues 1257–1268 (PSPPKEPPPPPS) the composition is skewed to pro residues. Over residues 1269-1285 (LSSSSSLPSSFSSASVP) the composition is skewed to low complexity. A compositionally biased stretch (polar residues) spans 1291–1306 (DSSSPQVTYNLHSPQI). The segment at 1314–1353 (TPIYLRRARAQGIVKEIPLYLPHSPMLESTEDCLVEPGRE) is interaction with MAPK1. The segment covering 1350-1359 (PGRESLRSPE) has biased composition (basic and acidic residues). The segment covering 1532–1545 (EAGKKTSPKPESKT) has biased composition (basic and acidic residues). Low complexity predominate over residues 1599 to 1616 (LSLPNSILRSRSLPSRPS). The segment covering 1678–1688 (GDFFNSPKEEG) has biased composition (basic and acidic residues). Ser-1683 carries the post-translational modification Phosphoserine. The span at 1706 to 1720 (STSMGQVAHPSSTGQ) shows a compositional bias: polar residues. Over residues 1749–1759 (TEATSSPTSSS) the composition is skewed to low complexity. The 151-residue stretch at 1789-1939 (KQEELKRLHK…ERTQDQHFEN (151 aa)) folds into the bMERB domain.

It belongs to the Mical family. As to quaternary structure, interacts with PLXNA4. Interacts with RAB1B. Interacts with MAPK1/ERK2. Interacts with RAB1B, RAB35, RAB8A, RAB10, RAB13 and RAB15 (in their GTP-bound forms); binding to RAB1B and RAB35 is of low affinity compared to other Rab proteins; binding to RAB1B and RAB35 is of low affinity compared to other Rab proteins; at least in case of RAB8A may bind 2 molecules of RAB8A simultaneously through a high and a low affinity binding site, respectively. It depends on FAD as a cofactor. In terms of tissue distribution, expressed only in testis (at protein level).

It is found in the cytoplasm. It localises to the nucleus. The catalysed reaction is L-methionyl-[F-actin] + NADPH + O2 + H(+) = L-methionyl-(R)-S-oxide-[F-actin] + NADP(+) + H2O. In terms of biological role, methionine monooxygenase that promotes depolymerization of F-actin by mediating oxidation of residues 'Met-44' and 'Met-47' on actin to form methionine-sulfoxide, resulting in actin filament disassembly and preventing repolymerization. Regulates the disassembly of branched actin networks also by oxidizing ARP3B-containing ARP2/3 complexes leading to ARP3B dissociation from the network. Acts as a key regulator of the SRF signaling pathway elicited by nerve growth factor and serum: mediates oxidation and subsequent depolymerization of nuclear actin, leading to increase MKL1/MRTF-A presence in the nucleus and promote SRF:MKL1/MRTF-A-dependent gene transcription. Does not activate SRF:MKL1/MRTF-A through RhoA. In Mus musculus (Mouse), this protein is [F-actin]-monooxygenase MICAL2.